A 359-amino-acid polypeptide reads, in one-letter code: 24-methylenesterol C-methyltransferase 3 (359 aa).

The chain crosses the membrane as a helical span at residues 4 to 24 (VALYCTAGLIAGAVYWFICVL).

It belongs to the class I-like SAM-binding methyltransferase superfamily. Erg6/SMT family.

It is found in the membrane. It catalyses the reaction 24-methylidenelophenol + S-adenosyl-L-methionine = (Z)-24-ethylidenelophenol + S-adenosyl-L-homocysteine + H(+). It participates in steroid biosynthesis; sterol biosynthesis. Its function is as follows. Catalyzes the methyl transfer from S-adenosyl-methionine to the methylene group of 24-methylene lophenol to form 24-ethylidene lophenol. In Arabidopsis thaliana (Mouse-ear cress), this protein is 24-methylenesterol C-methyltransferase 3 (SMT3).